We begin with the raw amino-acid sequence, 84 residues long: Large ribosomal subunit protein bL31B (84 aa).

Belongs to the bacterial ribosomal protein bL31 family. Type B subfamily. As to quaternary structure, part of the 50S ribosomal subunit.

In Alkalilimnicola ehrlichii (strain ATCC BAA-1101 / DSM 17681 / MLHE-1), this protein is Large ribosomal subunit protein bL31B.